Reading from the N-terminus, the 76-residue chain is Putative cation transport regulator ChaB (76 aa).

Belongs to the ChaB family. Monomer.

Its function is as follows. Might be a regulator of the sodium-potassium/proton antiporter ChaA. This chain is Putative cation transport regulator ChaB, found in Escherichia coli O157:H7.